We begin with the raw amino-acid sequence, 63 residues long: Acrosin inhibitor 1 (63 aa).

Residues Phe8–Tyr63 enclose the Kazal-like domain. 3 disulfide bridges follow: Cys14–Cys43, Cys21–Cys40, and Cys29–Cys61.

As to expression, seminal plasma.

The protein resides in the secreted. Functionally, strong inhibitor of acrosin. This chain is Acrosin inhibitor 1, found in Bos taurus (Bovine).